The following is a 346-amino-acid chain: Golgi-associated RAB2 interactor protein 2 (346 aa).

Residues 275–346 (TPVESEANTS…EKHVRQPKDF (72 aa)) are disordered. 2 stretches are compositionally biased toward basic and acidic residues: residues 283–297 (TSKE…EKTP) and 334–346 (KLVE…PKDF).

This sequence belongs to the GARIN family. Interacts with CALM1.

Its subcellular location is the cell projection. The protein resides in the cilium. It localises to the flagellum. In terms of biological role, seems to play a role in sperm motility. The chain is Golgi-associated RAB2 interactor protein 2 (GARIN2) from Macaca fascicularis (Crab-eating macaque).